The following is a 398-amino-acid chain: Potassium channel subfamily K member 4 (398 aa).

At 1–3 (MRS) the chain is on the cytoplasmic side. The chain crosses the membrane as a helical span at residues 4 to 24 (TTLLALLALVLLYLVSGALVF). Residues 25 to 88 (QALEQPHEQQ…WTNSSNHSSA (64 aa)) are Extracellular-facing. N-linked (GlcNAc...) asparagine glycans are attached at residues N81 and N84. The helical intramembrane region spans 89 to 103 (WNLGSAFFFSGTIIT). Residues T104, I105, G106, and Y107 each contribute to the K(+) site. A selectivity filter 1 region spans residues 104–109 (TIGYGN). An intramembrane segment occupies 104–110 (TIGYGNI). Topologically, residues 111–118 (VLHTDAGR) are extracellular. Residues 119-151 (LFCIFYALVGIPLFGMLLAGVGDRLGSSLRRGI) form a helical membrane-spanning segment. Residues 152–173 (GHIEAIFLKWHVPPGLVRSLSA) lie on the Cytoplasmic side of the membrane. Residues 174–195 (VLFLLIGCLLFVLTPTFVFSYM) traverse the membrane as a helical segment. The Extracellular portion of the chain corresponds to 196–200 (ESWSK). The helical intramembrane region spans 201–214 (LEAIYFVIVTLTTV). Positions 213, 214, 215, and 216 each coordinate K(+). Residues 213–218 (TVGFGD) are selectivity filter 2. Residues 215–220 (GFGDYV) lie within the membrane without spanning it. Residues 221–234 (PGDGTGQNSPAYQP) lie on the Extracellular side of the membrane. Residues 235–261 (LVWFWILFGLAYFASVLTTIGNWLRAV) form a helical membrane-spanning segment. Residues 262–398 (SRRTRAEMGG…GRLRDKAVPV (137 aa)) are Cytoplasmic-facing. Residues 282 to 292 (TVTARVTQRTG) are compositionally biased toward polar residues. The interval 282–398 (TVTARVTQRT…GRLRDKAVPV (117 aa)) is disordered. The span at 370–389 (PRGRRRPNPSKKPSRPRGPG) shows a compositional bias: basic residues.

The protein belongs to the two pore domain potassium channel (TC 1.A.1.8) family. In terms of assembly, homodimer; disulfide-linked. Forms heterodimers with other 2-pore domain K(+) channel subunits, such as KCNK2 and KCNK10. Post-translationally, N-glycosylated. In terms of tissue distribution, expressed in brain, spinal cord and eye. Not detected in heart, skeletal muscle, liver, lungs, kidney and testis.

The protein resides in the cell membrane. It is found in the cell projection. It localises to the axon. It catalyses the reaction K(+)(in) = K(+)(out). It carries out the reaction Rb(+)(in) = Rb(+)(out). The enzyme catalyses Cs(+)(in) = Cs(+)(out). Its activity is regulated as follows. Activated by arachidonic acid and other polyunsaturated fatty acids. Not affected by volatile general anesthetics such as chloroform, diethyl ether, halothane and isoflurane. Activated at intracellular and extracellular basic pHs. In terms of biological role, k(+) channel that conducts voltage-dependent outward rectifying currents upon membrane depolarization. Voltage sensing is coupled to K(+) electrochemical gradient in an 'ion flux gating' mode where outward but not inward ion flow opens the gate. Converts to voltage-independent 'leak' conductance mode upon stimulation by various stimuli including mechanical membrane stretch, basic pH, temperature and lipids. Homo- and heterodimerizes to form functional channels with distinct regulatory and gating properties. At trigeminal A-beta afferent nerves, the heterodimer of KCNK2/TREK-1 and KCNK4/TRAAK is mostly coexpressed at nodes of Ranvier where it conducts voltage-independent mechanosensitive and thermosensitive currents, allowing rapid action potential repolarization, high speed and high frequence saltatory conduction on myelinated nerves to ensure prompt sensory responses. Permeable to other monovalent cations such as Rb(+) and Cs(+). The polypeptide is Potassium channel subfamily K member 4 (Mus musculus (Mouse)).